The chain runs to 364 residues: Spermidine/putrescine import ATP-binding protein PotA (364 aa).

Residues leucine 5–isoleucine 235 enclose the ABC transporter domain. Glycine 37–threonine 44 contacts ATP.

The protein belongs to the ABC transporter superfamily. Spermidine/putrescine importer (TC 3.A.1.11.1) family. As to quaternary structure, the complex is composed of two ATP-binding proteins (PotA), two transmembrane proteins (PotB and PotC) and a solute-binding protein (PotD).

The protein localises to the cell membrane. The enzyme catalyses ATP + H2O + polyamine-[polyamine-binding protein]Side 1 = ADP + phosphate + polyamineSide 2 + [polyamine-binding protein]Side 1.. In terms of biological role, part of the ABC transporter complex PotABCD involved in spermidine/putrescine import. Responsible for energy coupling to the transport system. This Staphylococcus saprophyticus subsp. saprophyticus (strain ATCC 15305 / DSM 20229 / NCIMB 8711 / NCTC 7292 / S-41) protein is Spermidine/putrescine import ATP-binding protein PotA.